Here is a 457-residue protein sequence, read N- to C-terminus: uncharacterized protein (457 aa).

The TRAM domain occupies 10 to 69 (ALLQGQTVTVPITALAAGGDGIARLTDGRVLFVAGAVPGDTVEARLVHLKKDHGFGKILQ). Residues cysteine 82, cysteine 88, cysteine 91, and cysteine 170 each coordinate [4Fe-4S] cluster. The S-adenosyl-L-methionine site is built by glutamine 294, tyrosine 323, glutamate 344, and aspartate 387. The active-site Nucleophile is the cysteine 414.

It belongs to the class I-like SAM-binding methyltransferase superfamily. RNA M5U methyltransferase family.

This is an uncharacterized protein from Gloeobacter violaceus (strain ATCC 29082 / PCC 7421).